Here is a 340-residue protein sequence, read N- to C-terminus: MIFIDACLKKPTPYTPVWMMRQAGRYLPEYMAVRAKAGDFLSLCKDYKKASEVTLQPVEILGVDAAILFSDILVVPLEMGMDLRFEKGEGPVFTKPLRDEAALDALSIERSVKSLAYVYDTIKLTRENLAKDKALIGFCGAPWTIATYMIEGGGSKNYAVCKKMLYENPEFLHQILEKVTQALILYIKEQIKAGVNAVQIFDSWAAALEEQAYFEFGFSYINKIVDSVKAEFPDIPVIVFPKGISGYLDKISGKFDVFGVDWSTPIELAKEKLSPRYVLQGNMEPTRLYSKKAIDEGVDKILSTMRGAPHIFNLGHGILPDVPVENAKYFIKEVQRKSAR.

Residues 21-25 (RQAGR), Asp-71, Tyr-148, Ser-203, and His-316 each bind substrate.

It belongs to the uroporphyrinogen decarboxylase family. As to quaternary structure, homodimer.

The protein localises to the cytoplasm. It catalyses the reaction uroporphyrinogen III + 4 H(+) = coproporphyrinogen III + 4 CO2. It participates in porphyrin-containing compound metabolism; protoporphyrin-IX biosynthesis; coproporphyrinogen-III from 5-aminolevulinate: step 4/4. Functionally, catalyzes the decarboxylation of four acetate groups of uroporphyrinogen-III to yield coproporphyrinogen-III. The sequence is that of Uroporphyrinogen decarboxylase from Campylobacter concisus (strain 13826).